The sequence spans 127 residues: MKRHEAREKALQVLFQLDNTDLTVEEAMGHIKGQPTNVFYEKIVTGTAEHLEEIDATLEQHLEKWSLARLPKIERTVLRLAVYELLYMPETPKRVVLNEAIELCKTFGDDSSSKFVNGVLSKFTEQE.

This sequence belongs to the NusB family.

Functionally, involved in transcription antitermination. Required for transcription of ribosomal RNA (rRNA) genes. Binds specifically to the boxA antiterminator sequence of the ribosomal RNA (rrn) operons. The sequence is that of Transcription antitermination protein NusB from Lysinibacillus sphaericus (strain C3-41).